The following is a 446-amino-acid chain: MSSQFTTPVVTEMQVIPVAGHDSMLMNLSGAHAPFFTRNIVIIKDNSGHTGVGEIPGGEKIRKTLEDAIPLVVGKTLGEYKNVLTLVRNTFADRDAGGRGLQTFDLRTTIHVVTGIEAAMLDLLGQHLGVNVASLLGDGQQRSEVEMLGYLFFVGNRKATPLPYQSQPDDSCDWYRLRHEEAMTPDAVVRLAEAAYEKYGFNDFKLKGGVLAGEEEAESIVALAQRFPQARITLDPNGAWSLNEAIKIGKYLKGSLAYAEDPCGAEQGFSGREVMAEFRRATGLPTATNMIATDWRQMGHTLSLQSVDIPLADPHFWTMQGSVRVAQMCHEFGLTWGSHSNNHFDISLAMFTHVAAAAPGKITAIDTHWIWQEGNQRLTKEPFEIKGGLVQVPEKPGLGVEIDMDQVMKAHELYQKHGLGARDDAMGMQYLIPGWTFDNKRPCMVR.

Histidine 32, threonine 103, tyrosine 150, and lysine 205 together coordinate substrate. Residue lysine 207 is the Proton acceptor of the active site. Mg(2+) is bound by residues aspartate 235, glutamate 266, and asparagine 289. Residue 235-237 (DPN) participates in substrate binding. Substrate is bound by residues asparagine 289, 339–341 (HSN), histidine 368, and arginine 422. The active-site Proton acceptor is histidine 339.

It belongs to the mandelate racemase/muconate lactonizing enzyme family. GlucD subfamily. In terms of assembly, homodimer. Mg(2+) is required as a cofactor.

The enzyme catalyses D-glucarate = 5-dehydro-4-deoxy-D-glucarate + H2O. The protein operates within carbohydrate acid metabolism; D-glucarate degradation; 2,5-dioxopentanoate from D-glucarate: step 1/2. In terms of biological role, catalyzes the dehydration of glucarate to 5-keto-4-deoxy-D-glucarate (5-kdGluc). Also acts on L-idarate. The polypeptide is Glucarate dehydratase (gudD) (Escherichia coli O157:H7).